Here is a 702-residue protein sequence, read N- to C-terminus: MNHTHETIIAGRPMKVEFGKLGMLSDAAILMSYGDTVILTNVNASEKPREGIDFFPLSVEYEERLYSVGKIPGGFIKREGKPSEKAILNGRAIDRPLRPLFPKGYRNDVQVVCTVVSVENDNLPEILAINAASMALCLSSIPFTTPVAAVQVGLIGEEFILNPTSKEREESSLQLTVCATKERVMMIEAGGDEIPEDTMINAIKFGFDKCQDIIKFQEEAVSMFGKEKKVPELHKVPEEIEEAVREFAFDMISESMHITDRDERNAAMDEVKAKINEEFEEKYPDNMSDIGEAVYDMQKEVVRHMLLKEGKRPDGRAFDQVRNIGCEVGLLPRTHGTGLFTRGLTQVMTVATLGSISEIQILDGIGEEESKRYMHHYNFPAYSVGEVRPLRGPGRREIGHGALAERALEPLIPSEAEFPYTIRLVSEVLSSNGSTSQASVCGSTLALLDAGVPIKRPAAGIAMGLITSKDLTEEEVLTDIQGLEDFFGDMDFKVAGTEEGITSIQVDTKIKGLSEKVIHDAIYGARKARLMILDKIKECIPAPREEVSKYAPKTSTLQIDPEKIRDVIGAGGKVINKIIADTGVKIDIKEDGLVYVSSAESEGVKEAVKIIEGLTKEVKAGEIYLGKVTKIAQFGAFVEVLPNKEGLVHISKLDNKRVEKVEDVVSVGDEILVKVTEIDSQGRINLSRKDAIKEAEEENKQQ.

Residues aspartate 485 and aspartate 491 each coordinate Mg(2+). Residues 552-611 (PKTSTLQIDPEKIRDVIGAGGKVINKIIADTGVKIDIKEDGLVYVSSAESEGVKEAVKII) enclose the KH domain. Residues 621 to 689 (GEIYLGKVTK…SQGRINLSRK (69 aa)) form the S1 motif domain.

Belongs to the polyribonucleotide nucleotidyltransferase family. It depends on Mg(2+) as a cofactor.

Its subcellular location is the cytoplasm. It carries out the reaction RNA(n+1) + phosphate = RNA(n) + a ribonucleoside 5'-diphosphate. Functionally, involved in mRNA degradation. Catalyzes the phosphorolysis of single-stranded polyribonucleotides processively in the 3'- to 5'-direction. The chain is Polyribonucleotide nucleotidyltransferase from Clostridium perfringens (strain 13 / Type A).